The sequence spans 862 residues: Rab GTPase-binding effector protein 1 (862 aa).

Ala2 bears the N-acetylalanine mark. The stretch at 11-345 forms a coiled coil; sequence DVSLQQRVAE…KKADVEEEIK (335 aa). Lys282 carries the N6-acetyllysine modification. A disordered region spans residues 315–338; sequence ELKKKDQEDDEQQRLNKRKDHKKA. A phosphoserine mark is found at Ser374, Ser377, and Ser407. Thr408 bears the Phosphothreonine mark. A Phosphoserine modification is found at Ser410. Residues 435 to 447 are interaction with AP1G1, AP1G2, GGA1, GGA2 and GGA3; the sequence is DESDFGPLVGADS. The stretch at 534-816 forms a coiled coil; the sequence is DMCSNYEKQL…LQTELDVSEQ (283 aa).

It belongs to the rabaptin family. As to quaternary structure, homodimer when bound to RAB5A. Heterodimer with RABGEF1. The heterodimer binds RAB4A and RAB5A that have been activated by GTP-binding. Interacts with TSC2. Interacts with GGA1 (via GAE domain), GGA2 (via GAE domain) and GGA3 (via GAE domain). Interacts with AP1G1 (via GAE domain). Interacts with AP1G2 (via GAE domain). Interacts with ECPAS. Interacts with KCNH1. Interacts with PKD1 (via C-terminal domain) and GGA1; the interactions recruit PKD1:PKD2 complex to GGA1 and ARL3 at trans-Golgi network. Proteolytic cleavage by caspases in apoptotic cells causes loss of endosome fusion activity.

It localises to the cytoplasm. Its subcellular location is the early endosome. It is found in the recycling endosome. The protein localises to the cytoplasmic vesicle. In terms of biological role, rab effector protein acting as linker between gamma-adaptin, RAB4A and RAB5A. Involved in endocytic membrane fusion and membrane trafficking of recycling endosomes. Involved in KCNH1 channels trafficking to and from the cell membrane. Stimulates RABGEF1 mediated nucleotide exchange on RAB5A. Mediates the traffic of PKD1:PKD2 complex from the endoplasmic reticulum through the Golgi to the cilium. This chain is Rab GTPase-binding effector protein 1 (RABEP1), found in Homo sapiens (Human).